Reading from the N-terminus, the 257-residue chain is Imidazole glycerol phosphate synthase subunit HisF (257 aa).

Catalysis depends on residues Asp12 and Asp131.

This sequence belongs to the HisA/HisF family. As to quaternary structure, heterodimer of HisH and HisF.

Its subcellular location is the cytoplasm. The enzyme catalyses 5-[(5-phospho-1-deoxy-D-ribulos-1-ylimino)methylamino]-1-(5-phospho-beta-D-ribosyl)imidazole-4-carboxamide + L-glutamine = D-erythro-1-(imidazol-4-yl)glycerol 3-phosphate + 5-amino-1-(5-phospho-beta-D-ribosyl)imidazole-4-carboxamide + L-glutamate + H(+). Its pathway is amino-acid biosynthesis; L-histidine biosynthesis; L-histidine from 5-phospho-alpha-D-ribose 1-diphosphate: step 5/9. IGPS catalyzes the conversion of PRFAR and glutamine to IGP, AICAR and glutamate. The HisF subunit catalyzes the cyclization activity that produces IGP and AICAR from PRFAR using the ammonia provided by the HisH subunit. The protein is Imidazole glycerol phosphate synthase subunit HisF of Nocardia farcinica (strain IFM 10152).